We begin with the raw amino-acid sequence, 76 residues long: CLAVATA3/ESR (CLE)-related protein 46 (76 aa).

Positions Met-1–Cys-26 are cleaved as a signal peptide. The disordered stretch occupies residues Glu-53 to His-76. Pro-61 and Pro-64 each carry hydroxyproline. The O-linked (Ara...) hydroxyproline glycan is linked to Pro-64.

The protein belongs to the CLV3/ESR signal peptide family. The O-glycosylation (arabinosylation) of the hydroxyproline Pro-64 enhances binding affinity of the CLE46p peptide for its receptor.

It localises to the secreted. It is found in the extracellular space. Its function is as follows. Extracellular signal peptide that regulates cell fate. The chain is CLAVATA3/ESR (CLE)-related protein 46 from Arabidopsis thaliana (Mouse-ear cress).